A 173-amino-acid polypeptide reads, in one-letter code: Ribosome maturation factor RimM (173 aa).

The PRC barrel domain occupies 92 to 165; it reads EGEFYHADLI…RVVIEMPGEI (74 aa).

This sequence belongs to the RimM family. Binds ribosomal protein uS19.

The protein localises to the cytoplasm. In terms of biological role, an accessory protein needed during the final step in the assembly of 30S ribosomal subunit, possibly for assembly of the head region. Essential for efficient processing of 16S rRNA. May be needed both before and after RbfA during the maturation of 16S rRNA. It has affinity for free ribosomal 30S subunits but not for 70S ribosomes. In Nitrobacter hamburgensis (strain DSM 10229 / NCIMB 13809 / X14), this protein is Ribosome maturation factor RimM.